A 561-amino-acid chain; its full sequence is MAEASSLERQSPGAASCLPHSLCPGEPNLQTTAVVSMGSADHQFHLAEILSQNYGVREEHEGAAPGPEKPEEELEKDFVSQSSDMPLDELLALYGYETSDPISERESEGSDTAAHLPDMTLDKDQIAKDLLSGEEEEETQSSADDLTPSVTSHEASDLFPSQSGSCFLADADKEPGSSSSSDAEEDPLPANKCKKEIMVGPQFQADLSNLHSNRHGEKIYENEDQLLWDPNILPEREVEEFLYRAVKRRWHEMAGSQLPEGEAVKDSEQALYELVKCNFNAEEALRRLRFNVKVIRDGLCAWSEEERRNFEHGFRVHGKNFHLIQANKVRTRSVGECVEYYYLWKKSERYDYFSQQTRLGRRKYGPSGNTDADQDLEGSDPDGPGRPRSSPPLPLPAAAHGPGPEHDRLAQMHTEPLSMGSSMSRSLGEPGEALDVPPSSEPGPRLFPPLDEPSALPSSRRPPALAEPAFFPPATAAPEPGASPRLAVDLTLPEELPLVSSHEDTDGEPEETVGPPQVALSVAEFGLIGIGDVNPFLASHPACPASGLHSEPLSHCNVMTC.

Disordered regions lie at residues 1–28 (MAEA…GEPN) and 52–188 (QNYG…EDPL). Ser11 carries the post-translational modification Phosphoserine. Residues 140-165 (QSSADDLTPSVTSHEASDLFPSQSGS) are compositionally biased toward polar residues. One can recognise an ELM2 domain in the interval 195–292 (KEIMVGPQFQ…EALRRLRFNV (98 aa)). The SANT domain maps to 297 to 349 (DGLCAWSEEERRNFEHGFRVHGKNFHLIQANKVRTRSVGECVEYYYLWKKSER). Residues 360–515 (GRRKYGPSGN…DGEPEETVGP (156 aa)) are disordered. The span at 417 to 428 (LSMGSSMSRSLG) shows a compositional bias: low complexity. The span at 439–451 (SSEPGPRLFPPLD) shows a compositional bias: pro residues. Residues 453–482 (PSALPSSRRPPALAEPAFFPPATAAPEPGA) are compositionally biased toward low complexity.

Part of a complex containing at least CDYL, MIER1, MIER2, HDAC1 and HDAC2.

Its subcellular location is the nucleus. In terms of biological role, transcriptional repressor. The polypeptide is Mesoderm induction early response protein 2 (MIER2) (Bos taurus (Bovine)).